The following is a 50-amino-acid chain: uncharacterized protein (50 aa).

This is an uncharacterized protein from Treponema pallidum (strain Nichols).